The chain runs to 532 residues: CTP synthase (532 aa).

The segment at 1 to 267 (MAKFIFVTGG…QDIIIEQLQL (267 aa)) is amidoligase domain. Ser-13 lines the CTP pocket. Ser-13 is a UTP binding site. 14 to 19 (GLGKGI) serves as a coordination point for ATP. Tyr-54 is an L-glutamine binding site. Asp-71 is a binding site for ATP. Mg(2+)-binding residues include Asp-71 and Glu-141. CTP-binding positions include 148–150 (DIE), 188–193 (KTKPIQ), and Lys-224. UTP-binding positions include 188–193 (KTKPIQ) and Lys-224. The region spanning 292–532 (EISFVGKYIE…FIKAIIENNK (241 aa)) is the Glutamine amidotransferase type-1 domain. Gly-354 provides a ligand contact to L-glutamine. Cys-381 (nucleophile; for glutamine hydrolysis) is an active-site residue. L-glutamine contacts are provided by residues 382–385 (LGMQ), Glu-405, and Arg-461. Residues His-506 and Glu-508 contribute to the active site.

It belongs to the CTP synthase family. In terms of assembly, homotetramer.

It carries out the reaction UTP + L-glutamine + ATP + H2O = CTP + L-glutamate + ADP + phosphate + 2 H(+). It catalyses the reaction L-glutamine + H2O = L-glutamate + NH4(+). The enzyme catalyses UTP + NH4(+) + ATP = CTP + ADP + phosphate + 2 H(+). Its pathway is pyrimidine metabolism; CTP biosynthesis via de novo pathway; CTP from UDP: step 2/2. With respect to regulation, allosterically activated by GTP, when glutamine is the substrate; GTP has no effect on the reaction when ammonia is the substrate. The allosteric effector GTP functions by stabilizing the protein conformation that binds the tetrahedral intermediate(s) formed during glutamine hydrolysis. Inhibited by the product CTP, via allosteric rather than competitive inhibition. Catalyzes the ATP-dependent amination of UTP to CTP with either L-glutamine or ammonia as the source of nitrogen. Regulates intracellular CTP levels through interactions with the four ribonucleotide triphosphates. This Mycoplasma capricolum subsp. capricolum (strain California kid / ATCC 27343 / NCTC 10154) protein is CTP synthase.